The following is a 177-amino-acid chain: Large ribosomal subunit protein uL5 (177 aa).

The protein belongs to the universal ribosomal protein uL5 family. Part of the 50S ribosomal subunit; part of the 5S rRNA/L5/L18/L25 subcomplex. Contacts the 5S rRNA and the P site tRNA. Forms a bridge to the 30S subunit in the 70S ribosome.

Functionally, this is one of the proteins that bind and probably mediate the attachment of the 5S RNA into the large ribosomal subunit, where it forms part of the central protuberance. In the 70S ribosome it contacts protein S13 of the 30S subunit (bridge B1b), connecting the 2 subunits; this bridge is implicated in subunit movement. Contacts the P site tRNA; the 5S rRNA and some of its associated proteins might help stabilize positioning of ribosome-bound tRNAs. This Ehrlichia ruminantium (strain Welgevonden) protein is Large ribosomal subunit protein uL5.